Consider the following 353-residue polypeptide: NADH-quinone oxidoreductase subunit H (353 aa).

9 consecutive transmembrane segments (helical) span residues L8–W28, G75–I95, I108–G128, V148–L168, S178–A198, L229–F249, L258–V278, F297–P317, and M319–F339.

This sequence belongs to the complex I subunit 1 family. NDH-1 is composed of 14 different subunits. Subunits NuoA, H, J, K, L, M, N constitute the membrane sector of the complex.

The protein localises to the cell membrane. It catalyses the reaction a quinone + NADH + 5 H(+)(in) = a quinol + NAD(+) + 4 H(+)(out). In terms of biological role, NDH-1 shuttles electrons from NADH, via FMN and iron-sulfur (Fe-S) centers, to quinones in the respiratory chain. The immediate electron acceptor for the enzyme in this species is believed to be ubiquinone. Couples the redox reaction to proton translocation (for every two electrons transferred, four hydrogen ions are translocated across the cytoplasmic membrane), and thus conserves the redox energy in a proton gradient. This subunit may bind ubiquinone. This Dehalococcoides mccartyi (strain ATCC BAA-2266 / KCTC 15142 / 195) (Dehalococcoides ethenogenes (strain 195)) protein is NADH-quinone oxidoreductase subunit H.